A 333-amino-acid chain; its full sequence is MNSETFSAGPKSAPAPATLTIASRESRLAMWQAEHVRDALRKLYPACDVKILGMTTRGDQILDRTLSKVGGKGLFVKELENALADGRADLAVHSLKDVPMALPDGFALAAIMAREDARDAFVSNDYASLDALPAGAVVGTSSLRREAMLRARYPHLNVLPLRGNLDTRLAKLDRGDYAAIILAAAGLKRLGLEARIRALIDVEDSLPAAGQGALGIEIAAHRSDVAQWLAPLHDPHTALAVEAERMVSRALGGSCEVPLAAHAVWRAGELYLTGRVSTTDGRRVLSAQACGAVMTAADALALGRAVSDELDAQGARDIVNALLAGSQVGKGDA.

Position 255 is an S-(dipyrrolylmethanemethyl)cysteine (Cys255).

The protein belongs to the HMBS family. As to quaternary structure, monomer. Dipyrromethane serves as cofactor.

It catalyses the reaction 4 porphobilinogen + H2O = hydroxymethylbilane + 4 NH4(+). The protein operates within porphyrin-containing compound metabolism; protoporphyrin-IX biosynthesis; coproporphyrinogen-III from 5-aminolevulinate: step 2/4. Tetrapolymerization of the monopyrrole PBG into the hydroxymethylbilane pre-uroporphyrinogen in several discrete steps. This Burkholderia vietnamiensis (strain G4 / LMG 22486) (Burkholderia cepacia (strain R1808)) protein is Porphobilinogen deaminase.